The chain runs to 247 residues: Thioredoxin reductase-like selenoprotein T homolog selt-1.1 (247 aa).

Residues 1–26 (MSRFGVFIIGVLFFMSVCDVLRTVSA) form the signal peptide. Cys-92 and Cys-95 are joined by a disulfide.

This sequence belongs to the SelWTH family. SELT subfamily. In terms of tissue distribution, broadly expressed in neurons of nervous system including ADL, ASH, ASI, ASJ, ASK and AWB amphid sensilla neurons, in epithelial cells including hypodermal, arcade, pharyngeal, vulval and rectal cells, and in somatic muscle cells of the head, neck and body wall, and non-striated pharyngeal muscles.

Its subcellular location is the endoplasmic reticulum. The enzyme catalyses [thioredoxin]-dithiol + NADP(+) = [thioredoxin]-disulfide + NADPH + H(+). In terms of biological role, probably has thioredoxin reductase-like oxidoreductase activity. Plays a role in regulating the oxidative stress response, and odorant and pathogenic bacteria avoidance behavior. The chain is Thioredoxin reductase-like selenoprotein T homolog selt-1.1 from Caenorhabditis elegans.